We begin with the raw amino-acid sequence, 640 residues long: Guanylate-binding protein 4 (640 aa).

Residues 1–325 form a GTPase domain (Globular) region; the sequence is MGERTLHAAV…DAINSGAVPC (325 aa). A GB1/RHD3-type G domain is found at 50–292; it reads SQPVVVVAIV…FCSYIFTHAK (243 aa). GTP contacts are provided by residues 60–67, 82–84, and 112–116; these read GLYRTGKS, LGS, and DTEGL. Residues 499 to 612 are a coiled coil; it reads GEKAIAAERA…EQLRLLKILD (114 aa).

The protein belongs to the TRAFAC class dynamin-like GTPase superfamily. GB1/RHD3 GTPase family. GB1 subfamily. As to quaternary structure, heterodimer with other family members, including GBP1, GBP2 and GBP5. Dimerization regulates subcellular location. Interacts with IRF7; preventing interaction between TRAF6 and IRF7, resulting in impaired TRAF6-mediated IRF7 ubiquitination. Post-translationally, (Microbial infection) Ubiquitinated by S.flexneri IpaH9.8, leading to its degradation by the proteasome, thereby preventing its ability to promote host defense against bacterial infection.

It is found in the golgi apparatus membrane. Its subcellular location is the cytoplasm. The protein localises to the nucleus. The protein resides in the perinuclear region. The enzyme catalyses GTP + H2O = GDP + phosphate + H(+). In terms of biological role, interferon (IFN)-inducible GTPase that plays important roles in innate immunity against a diverse range of bacterial, viral and protozoan pathogens. Negatively regulates the antiviral response by inhibiting activation of IRF7 transcription factor. This Homo sapiens (Human) protein is Guanylate-binding protein 4.